The following is a 415-amino-acid chain: ATP-dependent Clp protease ATP-binding subunit ClpX (415 aa).

The 52-residue stretch at 1–52 (MAESKNNKKRCSFCGRSENEVGFLITGMNGYICDSCATQAYEITQEAMGAGK) folds into the ClpX-type ZB domain. Zn(2+) contacts are provided by Cys11, Cys14, Cys33, and Cys36. 121-128 (STGTGKTL) lines the ATP pocket.

The protein belongs to the ClpX chaperone family. Component of the ClpX-ClpP complex. Forms a hexameric ring that, in the presence of ATP, binds to fourteen ClpP subunits assembled into a disk-like structure with a central cavity, resembling the structure of eukaryotic proteasomes.

Its function is as follows. ATP-dependent specificity component of the Clp protease. It directs the protease to specific substrates. Can perform chaperone functions in the absence of ClpP. The protein is ATP-dependent Clp protease ATP-binding subunit ClpX of Bacteroides fragilis (strain ATCC 25285 / DSM 2151 / CCUG 4856 / JCM 11019 / LMG 10263 / NCTC 9343 / Onslow / VPI 2553 / EN-2).